A 409-amino-acid polypeptide reads, in one-letter code: Argininosuccinate synthase (409 aa).

Residues 16 to 24 (AYSGGLDTS) and Ala-44 contribute to the ATP site. Tyr-96 and Ser-101 together coordinate L-citrulline. An ATP-binding site is contributed by Gly-126. Positions 128, 132, and 133 each coordinate L-aspartate. Asn-132 contributes to the L-citrulline binding site. L-citrulline-binding residues include Arg-136, Ser-185, Ser-194, Glu-270, and Tyr-282.

The protein belongs to the argininosuccinate synthase family. Type 1 subfamily. In terms of assembly, homotetramer.

Its subcellular location is the cytoplasm. The enzyme catalyses L-citrulline + L-aspartate + ATP = 2-(N(omega)-L-arginino)succinate + AMP + diphosphate + H(+). It participates in amino-acid biosynthesis; L-arginine biosynthesis; L-arginine from L-ornithine and carbamoyl phosphate: step 2/3. The chain is Argininosuccinate synthase from Shewanella piezotolerans (strain WP3 / JCM 13877).